Reading from the N-terminus, the 700-residue chain is Acyl-coenzyme A oxidase 3 (700 aa).

The protein belongs to the acyl-CoA oxidase family. As to quaternary structure, heteropentamer composed of five different subunits. Requires FAD as cofactor.

The protein resides in the peroxisome. It carries out the reaction a 2,3-saturated acyl-CoA + O2 = a (2E)-enoyl-CoA + H2O2. Its pathway is lipid metabolism; peroxisomal fatty acid beta-oxidation. Oxidizes aliphatic acyl-CoA substrates of different chain lengths such as hexanoyl-CoA, decanoyl-CoA and myristoyl-CoA as well as aromatic/heterocyclic ring-substituted chromogenic substrates, such as furylpropionyl-CoA. Of the above substrates, the efficiency of the enzyme, exhibits the following order: decanoyl-CoA &gt; myristoyl-CoA &gt; hexanoyl-CoA &gt; furyl-propionyl-CoA. In Yarrowia lipolytica (strain CLIB 122 / E 150) (Yeast), this protein is Acyl-coenzyme A oxidase 3 (POX3).